Consider the following 430-residue polypeptide: Mannosylglucosylglycerate synthase (430 aa).

It belongs to the glycosyltransferase group 1 family. A divalent metal cation serves as cofactor.

It catalyses the reaction (2R)-2-O-(alpha-D-glucopyranosyl)-glycerate + GDP-alpha-D-mannose = (2R)-2-O-[alpha-D-mannopyranosyl-(1-&gt;2)-alpha-D-glucopyranosyl]-glycerate + GDP + H(+). Functionally, involved in the biosynthesis of the compatible solute mannosylglucosylglycerate through a nonphosphorylating pathway. Catalyzes the synthesis of mannosylglucosylglycerate (MGG) from glucosylglycerate (GG) and GDP-mannose. This Petrotoga mobilis (strain DSM 10674 / SJ95) protein is Mannosylglucosylglycerate synthase.